We begin with the raw amino-acid sequence, 143 residues long: Large ribosomal subunit protein uL13 (143 aa).

The protein belongs to the universal ribosomal protein uL13 family. In terms of assembly, part of the 50S ribosomal subunit.

Its function is as follows. This protein is one of the early assembly proteins of the 50S ribosomal subunit, although it is not seen to bind rRNA by itself. It is important during the early stages of 50S assembly. This Solibacter usitatus (strain Ellin6076) protein is Large ribosomal subunit protein uL13.